The sequence spans 853 residues: WEB family protein At5g16730, chloroplastic (853 aa).

Composition is skewed to low complexity over residues 1–27 and 36–49; these read MASKTKTSLSETTTTTTPTGKSSPATP and KSETSNNNSPSTTT. A chloroplast-targeting transit peptide spans 1 to 84; sequence MASKTKTSLS…PTPPEKSQAR (84 aa). Disordered regions lie at residues 1–106, 386–465, 666–765, and 778–820; these read MASK…IKED, KEDL…SKKA, LAKK…SVEV, and KEAF…ALTA. The span at 92 to 101 shows a compositional bias: polar residues; sequence ESPQTTTRLS. Residues 94–670 are a coiled coil; that stretch reads PQTTTRLSQI…LEEAILAKKQ (577 aa). 3 stretches are compositionally biased toward basic and acidic residues: residues 402–465, 698–718, and 732–753; these read EVSK…SKKA, NGHRSVEEKSAKVETLDHEPP, and MEEKEVNGKPEVETEKKEKKDE. Residues 754–763 show a composition bias toward acidic residues; it reads SQDDDKDDSV. Residues 778–788 show a composition bias toward basic and acidic residues; sequence KEAFPDKKSEL. Phosphoserine is present on Ser790. Residues 797-807 show a composition bias toward basic and acidic residues; that stretch reads SSKIDESDKTS.

The protein belongs to the WEB family.

It is found in the plastid. The protein resides in the chloroplast. In Arabidopsis thaliana (Mouse-ear cress), this protein is WEB family protein At5g16730, chloroplastic.